An 84-amino-acid chain; its full sequence is Small ribosomal subunit protein uS17 (84 aa).

It belongs to the universal ribosomal protein uS17 family. Part of the 30S ribosomal subunit.

Functionally, one of the primary rRNA binding proteins, it binds specifically to the 5'-end of 16S ribosomal RNA. The chain is Small ribosomal subunit protein uS17 from Clostridium perfringens (strain SM101 / Type A).